The primary structure comprises 882 residues: DNA mismatch repair protein MutS (882 aa).

An ATP-binding site is contributed by 635–642 (GPNMGGKS).

Belongs to the DNA mismatch repair MutS family.

This protein is involved in the repair of mismatches in DNA. It is possible that it carries out the mismatch recognition step. This protein has a weak ATPase activity. This Janthinobacterium sp. (strain Marseille) (Minibacterium massiliensis) protein is DNA mismatch repair protein MutS.